A 333-amino-acid polypeptide reads, in one-letter code: Probable xyloglucan endotransglucosylase/hydrolase protein 27 (333 aa).

Positions 1–20 are cleaved as a signal peptide; that stretch reads METLSRLLVFMSLFSGLVSG. The 203-residue stretch at 21-223 folds into the GH16 domain; that stretch reads FALQNLPITS…YKYAPYIARF (203 aa). Residue Glu108 is the Nucleophile of the active site. The Proton donor role is filled by Glu112. Residues Glu112 and 125-127 contribute to the xyloglucan site; that span reads QTN. The N-linked (GlcNAc...) asparagine glycan is linked to Asn131. Xyloglucan-binding positions include 135–139, 202–203, Gly207, and Arg282; these read HSGRE and KW. Cys277 and Cys290 are joined by a disulfide. Residues 311 to 333 form a disordered region; sequence IPRRHRNGKHRSKRSRVDGTESI. Positions 312–324 are enriched in basic residues; it reads PRRHRNGKHRSKR.

It belongs to the glycosyl hydrolase 16 family. XTH group 3 subfamily. Post-translationally, contains at least one intrachain disulfide bond essential for its enzymatic activity. In terms of tissue distribution, expressed in 7 day old seedlings, roots, hypocotyls, rosette leaves, internodes between nodes bearing axillary shoots, nodes bearing flowers, flower buds, anthers and siliques.

The protein resides in the secreted. The protein localises to the cell wall. It is found in the extracellular space. It localises to the apoplast. The catalysed reaction is breaks a beta-(1-&gt;4) bond in the backbone of a xyloglucan and transfers the xyloglucanyl segment on to O-4 of the non-reducing terminal glucose residue of an acceptor, which can be a xyloglucan or an oligosaccharide of xyloglucan.. Functionally, catalyzes xyloglucan endohydrolysis (XEH) and/or endotransglycosylation (XET). Cleaves and religates xyloglucan polymers, an essential constituent of the primary cell wall, and thereby participates in cell wall construction of growing tissues. Required for cell wall modification during the development of tracheary elements. The sequence is that of Probable xyloglucan endotransglucosylase/hydrolase protein 27 (XTH27) from Arabidopsis thaliana (Mouse-ear cress).